We begin with the raw amino-acid sequence, 101 residues long: Class II hydrophobin 5 (101 aa).

An N-terminal signal peptide occupies residues 1 to 15 (MQLTALLALATLAIA). Disulfide bonds link C33–C83, C44–C74, C45–C57, and C84–C95.

It belongs to the cerato-ulmin hydrophobin family. In terms of assembly, homodimer. Homodimers further self-assemble to form highly ordered films at water-air interfaces through intermolecular interactions.

It is found in the secreted. The protein resides in the cell wall. Functionally, aerial growth, conidiation, and dispersal of filamentous fungi in the environment rely upon a capability of their secreting small amphipathic proteins called hydrophobins (HPBs) with low sequence identity. Class I can self-assemble into an outermost layer of rodlet bundles on aerial cell surfaces, conferring cellular hydrophobicity that supports fungal growth, development and dispersal; whereas Class II form highly ordered films at water-air interfaces through intermolecular interactions but contribute nothing to the rodlet structure. This chain is Class II hydrophobin 5, found in Trichoderma asperellum (strain ATCC 204424 / CBS 433.97 / NBRC 101777).